We begin with the raw amino-acid sequence, 114 residues long: DNA polymerase epsilon subunit C (114 aa).

A disordered region spans residues 91–114; the sequence is PDAVAPATGEEEQPKRRGRKPAQE.

Heterotetramer. Consists of four subunits: POL2, DPB2, DPB3 and DPB4.

It is found in the nucleus. As accessory component of the DNA polymerase epsilon (DNA polymerase II) participates in chromosomal DNA replication. In Yarrowia lipolytica (strain CLIB 122 / E 150) (Yeast), this protein is DNA polymerase epsilon subunit C (DPB3).